Here is a 517-residue protein sequence, read N- to C-terminus: ATP synthase subunit alpha (517 aa).

An ATP-binding site is contributed by 174-181; that stretch reads GDRQTGKT.

The protein belongs to the ATPase alpha/beta chains family. F-type ATPases have 2 components, CF(1) - the catalytic core - and CF(0) - the membrane proton channel. CF(1) has five subunits: alpha(3), beta(3), gamma(1), delta(1), epsilon(1). CF(0) has four main subunits: a(1), b(1), b'(1) and c(9-12).

The protein resides in the cell inner membrane. It catalyses the reaction ATP + H2O + 4 H(+)(in) = ADP + phosphate + 5 H(+)(out). Functionally, produces ATP from ADP in the presence of a proton gradient across the membrane. The alpha chain is a regulatory subunit. The polypeptide is ATP synthase subunit alpha (Methylibium petroleiphilum (strain ATCC BAA-1232 / LMG 22953 / PM1)).